Here is a 142-residue protein sequence, read N- to C-terminus: MRILGIDYGDSRIGVAISDPMGWTAQGLEMIKSKDSLKKAVLRLSEIINEYSVTDIVIGYPINMNGTKGPRTERTEEFIKKISDLGQFNIIKWDERLTTVSAHRTMNELGIKASKKKGIVDTMSAVLILQGYLDRIAGNKKS.

Belongs to the YqgF nuclease family.

The protein localises to the cytoplasm. Functionally, could be a nuclease involved in processing of the 5'-end of pre-16S rRNA. The polypeptide is Putative pre-16S rRNA nuclease (Ruminiclostridium cellulolyticum (strain ATCC 35319 / DSM 5812 / JCM 6584 / H10) (Clostridium cellulolyticum)).